The chain runs to 273 residues: tRNA pseudouridine synthase B (273 aa).

Catalysis depends on D38, which acts as the Nucleophile.

The protein belongs to the pseudouridine synthase TruB family. Type 1 subfamily.

The catalysed reaction is uridine(55) in tRNA = pseudouridine(55) in tRNA. In terms of biological role, responsible for synthesis of pseudouridine from uracil-55 in the psi GC loop of transfer RNAs. The protein is tRNA pseudouridine synthase B of Campylobacter concisus (strain 13826).